The following is a 201-amino-acid chain: uncharacterized protein (201 aa).

The chain crosses the membrane as a helical span at residues 11 to 31 (IWKSLYLLIIVGMLYIGYILI).

Its subcellular location is the membrane. This is an uncharacterized protein from Rickettsia prowazekii (strain Madrid E).